Reading from the N-terminus, the 281-residue chain is Tryptophan synthase alpha chain (281 aa).

Residues E49 and D60 each act as proton acceptor in the active site.

Belongs to the TrpA family. Tetramer of two alpha and two beta chains.

It catalyses the reaction (1S,2R)-1-C-(indol-3-yl)glycerol 3-phosphate + L-serine = D-glyceraldehyde 3-phosphate + L-tryptophan + H2O. It participates in amino-acid biosynthesis; L-tryptophan biosynthesis; L-tryptophan from chorismate: step 5/5. Its function is as follows. The alpha subunit is responsible for the aldol cleavage of indoleglycerol phosphate to indole and glyceraldehyde 3-phosphate. The protein is Tryptophan synthase alpha chain of Methanocaldococcus jannaschii (strain ATCC 43067 / DSM 2661 / JAL-1 / JCM 10045 / NBRC 100440) (Methanococcus jannaschii).